Here is a 295-residue protein sequence, read N- to C-terminus: uncharacterized protein (295 aa).

A Sigma-54 factor interaction domain is found at 4-233; it reads IVVKSMAMEK…LQNTIERLVL (230 aa).

This is an uncharacterized protein from Pseudomonas sp. (strain NS671).